We begin with the raw amino-acid sequence, 263 residues long: Protein PYRICULARIA ORYZAE RESISTANCE 21 (263 aa).

The HMA domain occupies 1–68 (MGILVISVDL…IWCKAGKIIK (68 aa)). Cys12 and Cys15 together coordinate a metal cation. Positions 126–153 (CEKPKPCEKPPPCKPEEPPKPPPEKPPP) are disordered. The span at 139–153 (KPEEPPKPPPEKPPP) shows a compositional bias: basic and acidic residues.

Involved in defense responses. Contributes to slowing defense responses toward Magnaporthe oryzae. In Oryza sativa subsp. indica (Rice), this protein is Protein PYRICULARIA ORYZAE RESISTANCE 21.